The following is a 235-amino-acid chain: Small ribosomal subunit protein uS10m (235 aa).

A mitochondrion-targeting transit peptide spans 1–19; sequence MLRTSVRSPLLYRCLSKRF.

Belongs to the universal ribosomal protein uS10 family. Part of the mitochondrial small ribosomal subunit.

It localises to the mitochondrion. Functionally, involved in mitochondrial genome encoded proteins translation. Involved in the binding of tRNA to the ribosomes. This Candida glabrata (strain ATCC 2001 / BCRC 20586 / JCM 3761 / NBRC 0622 / NRRL Y-65 / CBS 138) (Yeast) protein is Small ribosomal subunit protein uS10m (RSM10).